A 419-amino-acid chain; its full sequence is G protein-activated inward rectifier potassium channel 4 (419 aa).

The disordered stretch occupies residues Met-1–Lys-24. Residues Met-1 to Trp-86 lie on the Cytoplasmic side of the membrane. The residue at position 5 (Ser-5) is a Phosphoserine. The chain crosses the membrane as a helical span at residues Arg-87 to Ile-111. Residues Ala-112 to Gly-135 are Extracellular-facing. The segment at residues Phe-136–Glu-147 is an intramembrane region (helical; Pore-forming). The pore-forming intramembrane region spans Thr-148–Phe-154. Residues Thr-149–Phe-154 carry the Selectivity filter motif. Over Arg-155–Glu-163 the chain is Extracellular. A helical transmembrane segment spans residues Gly-164–Cys-185. Residues Met-186–Ala-419 lie on the Cytoplasmic side of the membrane. Residues Pro-381 to Ala-419 are disordered. The span at Ala-396–Glu-407 shows a compositional bias: acidic residues.

The protein belongs to the inward rectifier-type potassium channel (TC 1.A.2.1) family. KCNJ5 subfamily. As to quaternary structure, associates with KCNJ3/GIRK1 or KCNJ6/GIRK2 to form a G-protein-activated heteromultimer pore-forming unit. The resulting inward current is much larger.

The protein resides in the membrane. The catalysed reaction is K(+)(in) = K(+)(out). With respect to regulation, heteromultimer composed of KCNJ3/GIRK1 and KCNJ5/GIRK4 is activated by phosphatidylinositol 4,5 biphosphate (PtdIns(4,5)P2). Inward rectifier potassium channels are characterized by a greater tendency to allow potassium to flow into the cell rather than out of it. Their voltage dependence is regulated by the concentration of extracellular potassium; as external potassium is raised, the voltage range of the channel opening shifts to more positive voltages. The inward rectification is mainly due to the blockage of outward current by internal magnesium. This receptor plays a crucial role in regulating the heartbeat. Can be blocked by external barium. This potassium channel is controlled by G proteins. The chain is G protein-activated inward rectifier potassium channel 4 (KCNJ5) from Bos taurus (Bovine).